We begin with the raw amino-acid sequence, 396 residues long: Ornithine aminotransferase (396 aa).

K255 is subject to N6-(pyridoxal phosphate)lysine.

The protein belongs to the class-III pyridoxal-phosphate-dependent aminotransferase family. OAT subfamily. Pyridoxal 5'-phosphate serves as cofactor.

It localises to the cytoplasm. It catalyses the reaction a 2-oxocarboxylate + L-ornithine = L-glutamate 5-semialdehyde + an L-alpha-amino acid. It functions in the pathway amino-acid biosynthesis; L-proline biosynthesis; L-glutamate 5-semialdehyde from L-ornithine: step 1/1. Functionally, catalyzes the interconversion of ornithine to glutamate semialdehyde. This chain is Ornithine aminotransferase, found in Staphylococcus epidermidis (strain ATCC 12228 / FDA PCI 1200).